Here is a 562-residue protein sequence, read N- to C-terminus: Phosphomethylpyrimidine synthase (562 aa).

Substrate-binding positions include N179, M208, Y237, H273, 293 to 295, 334 to 337, and E373; these read SRG and DGLR. Zn(2+) is bound at residue H377. Y400 provides a ligand contact to substrate. H441 is a Zn(2+) binding site. [4Fe-4S] cluster is bound by residues C521, C524, and C529.

Belongs to the ThiC family. The cofactor is [4Fe-4S] cluster.

It catalyses the reaction 5-amino-1-(5-phospho-beta-D-ribosyl)imidazole + S-adenosyl-L-methionine = 4-amino-2-methyl-5-(phosphooxymethyl)pyrimidine + CO + 5'-deoxyadenosine + formate + L-methionine + 3 H(+). The protein operates within cofactor biosynthesis; thiamine diphosphate biosynthesis. Functionally, catalyzes the synthesis of the hydroxymethylpyrimidine phosphate (HMP-P) moiety of thiamine from aminoimidazole ribotide (AIR) in a radical S-adenosyl-L-methionine (SAM)-dependent reaction. The sequence is that of Phosphomethylpyrimidine synthase from Geobacillus kaustophilus (strain HTA426).